A 327-amino-acid polypeptide reads, in one-letter code: Cytochrome P450 2C42 (327 aa).

Heme is bound at residue Cys272.

It belongs to the cytochrome P450 family. It depends on heme as a cofactor.

It localises to the endoplasmic reticulum membrane. The protein resides in the microsome membrane. It carries out the reaction an organic molecule + reduced [NADPH--hemoprotein reductase] + O2 = an alcohol + oxidized [NADPH--hemoprotein reductase] + H2O + H(+). Its function is as follows. Cytochromes P450 are a group of heme-thiolate monooxygenases. In liver microsomes, this enzyme is involved in an NADPH-dependent electron transport pathway. It oxidizes a variety of structurally unrelated compounds, including steroids, fatty acids, and xenobiotics. This Sus scrofa (Pig) protein is Cytochrome P450 2C42 (CYP2C42).